The primary structure comprises 114 residues: Large ribosomal subunit protein uL22 (114 aa).

It belongs to the universal ribosomal protein uL22 family. Part of the 50S ribosomal subunit.

In terms of biological role, this protein binds specifically to 23S rRNA; its binding is stimulated by other ribosomal proteins, e.g. L4, L17, and L20. It is important during the early stages of 50S assembly. It makes multiple contacts with different domains of the 23S rRNA in the assembled 50S subunit and ribosome. Its function is as follows. The globular domain of the protein is located near the polypeptide exit tunnel on the outside of the subunit, while an extended beta-hairpin is found that lines the wall of the exit tunnel in the center of the 70S ribosome. The sequence is that of Large ribosomal subunit protein uL22 from Streptococcus thermophilus (strain CNRZ 1066).